The primary structure comprises 106 residues: Cell division protein FtsL (106 aa).

The Cytoplasmic portion of the chain corresponds to 1 to 22; that stretch reads MPRQSPPNLAKLIALDLLTVGR. Residues 23 to 43 traverse the membrane as a helical segment; the sequence is VPLLLLVLIFSCAMGVVFMTH. Residues 44-106 lie on the Periplasmic side of the membrane; that stretch reads HTRQAISAKD…SDKEVVINLK (63 aa).

It belongs to the FtsL family. As to quaternary structure, part of a complex composed of FtsB, FtsL and FtsQ.

The protein resides in the cell inner membrane. Its function is as follows. Essential cell division protein. May link together the upstream cell division proteins, which are predominantly cytoplasmic, with the downstream cell division proteins, which are predominantly periplasmic. This chain is Cell division protein FtsL, found in Vibrio cholerae serotype O1 (strain ATCC 39315 / El Tor Inaba N16961).